An 827-amino-acid chain; its full sequence is Probable beta-glucosidase H (827 aa).

Residue D223 is part of the active site. The PA14 domain occupies 387-546; it reads RLLTNAVMHF…DSAEMVRSAV (160 aa). N471, N594, N600, and N625 each carry an N-linked (GlcNAc...) asparagine glycan.

This sequence belongs to the glycosyl hydrolase 3 family.

Its subcellular location is the secreted. It carries out the reaction Hydrolysis of terminal, non-reducing beta-D-glucosyl residues with release of beta-D-glucose.. Its pathway is glycan metabolism; cellulose degradation. Its function is as follows. Beta-glucosidases are one of a number of cellulolytic enzymes involved in the degradation of cellulosic biomass. Catalyzes the last step releasing glucose from the inhibitory cellobiose. This is Probable beta-glucosidase H (bglH) from Aspergillus oryzae (strain ATCC 42149 / RIB 40) (Yellow koji mold).